A 441-amino-acid polypeptide reads, in one-letter code: Glutamyl-tRNA reductase (441 aa).

Substrate contacts are provided by residues 47-50 (TCNR), S104, 109-111 (EAQ), and Q115. The active-site Nucleophile is C48. An NADP(+)-binding site is contributed by 184 to 189 (GAGEMG).

Belongs to the glutamyl-tRNA reductase family. Homodimer.

It catalyses the reaction (S)-4-amino-5-oxopentanoate + tRNA(Glu) + NADP(+) = L-glutamyl-tRNA(Glu) + NADPH + H(+). The protein operates within porphyrin-containing compound metabolism; protoporphyrin-IX biosynthesis; 5-aminolevulinate from L-glutamyl-tRNA(Glu): step 1/2. Catalyzes the NADPH-dependent reduction of glutamyl-tRNA(Glu) to glutamate 1-semialdehyde (GSA). The sequence is that of Glutamyl-tRNA reductase from Myxococcus xanthus (strain DK1622).